We begin with the raw amino-acid sequence, 313 residues long: Malate dehydrogenase (313 aa).

NAD(+) contacts are provided by residues Gly-11–Gly-16 and Asp-35. Substrate contacts are provided by Arg-84 and Arg-90. Residues Asn-97 and Val-120–Asn-122 contribute to the NAD(+) site. Substrate-binding residues include Asn-122 and Arg-153. The active-site Proton acceptor is His-177.

This sequence belongs to the LDH/MDH superfamily. MDH type 3 family.

It catalyses the reaction (S)-malate + NAD(+) = oxaloacetate + NADH + H(+). Its function is as follows. Catalyzes the reversible oxidation of malate to oxaloacetate. The chain is Malate dehydrogenase from Ehrlichia ruminantium (strain Welgevonden).